Consider the following 101-residue polypeptide: Trp operon repressor homolog (101 aa).

Residues 59–82 (QREIQQNLSTSAATITRGSNMLKM) mediate DNA binding.

The protein belongs to the TrpR family. As to quaternary structure, homodimer.

The protein resides in the cytoplasm. Functionally, this protein is an aporepressor. When complexed with L-tryptophan it binds the operator region of the trp operon and prevents the initiation of transcription. This Actinobacillus succinogenes (strain ATCC 55618 / DSM 22257 / CCUG 43843 / 130Z) protein is Trp operon repressor homolog.